A 238-amino-acid chain; its full sequence is MRPNNRELNQVRPVKITRHYTRYAEGSVLVEFGETKVLCNATVEETVPRFLKGQQQGWVTAEYGMLPRSTHSRMQREAAKGKQGGRTMEIQRLIARSLRAVVDLKALGERTVTVDCDVIQADGGTRTAAITGACVALHDAMSKLVADGVLKENPMKGLVAAISVGIVDGNAVCDLEYVEDSNAETDMNVVMVEDGRLVEVQGTAEGEPFSHMELLQLLDLAHQGINQLLDAQRKALAL.

Residues Arg86 and 124–126 (GTR) each bind phosphate.

Belongs to the RNase PH family. Homohexameric ring arranged as a trimer of dimers.

The catalysed reaction is tRNA(n+1) + phosphate = tRNA(n) + a ribonucleoside 5'-diphosphate. Functionally, phosphorolytic 3'-5' exoribonuclease that plays an important role in tRNA 3'-end maturation. Removes nucleotide residues following the 3'-CCA terminus of tRNAs; can also add nucleotides to the ends of RNA molecules by using nucleoside diphosphates as substrates, but this may not be physiologically important. Probably plays a role in initiation of 16S rRNA degradation (leading to ribosome degradation) during starvation. In Actinobacillus pleuropneumoniae serotype 5b (strain L20), this protein is Ribonuclease PH.